The following is a 364-amino-acid chain: MREETREQPAPLRSGLTTGSCATATSLAAARLLLTGVSTDAVSITLPKGKVVQMRLEFCRREDERAEAGTLKDAGDDPDVTHGALLYSQVRLQDEPGIRFVAGVGVGTVTRPGLVLAVGEPAINPVPRRMISEHLQQLADDCAYRGGFEVTVNVKGGEQLALKTMNPRLGILGGLSILGTSGIVRPFSCAAYIASIHQGIDVAHTNGYTHIAACTGNASEDTMRRVYGLPEIALIEMGDFVGAVLKHLRKVPVPRLSLCGGFGKISKLAAGHMDLHSRHSSIDLPQLAGWAADIGADADLQAAIMAANTSQQALALAHAAGIALGDAVCAHALAFARSVVPAQVQVEVFAIDRQGGIVGKAGMQ.

This sequence belongs to the CbiD family.

It carries out the reaction Co-precorrin-5B + S-adenosyl-L-methionine = Co-precorrin-6A + S-adenosyl-L-homocysteine. The protein operates within cofactor biosynthesis; adenosylcobalamin biosynthesis; cob(II)yrinate a,c-diamide from sirohydrochlorin (anaerobic route): step 6/10. In terms of biological role, catalyzes the methylation of C-1 in cobalt-precorrin-5B to form cobalt-precorrin-6A. The chain is Cobalt-precorrin-5B C(1)-methyltransferase from Pseudomonas putida (strain W619).